A 236-amino-acid chain; its full sequence is uncharacterized protein (236 aa).

This is an uncharacterized protein from Sus scrofa (Pig).